A 543-amino-acid polypeptide reads, in one-letter code: Acrosin-binding protein (543 aa).

The N-terminal stretch at 1-25 is a signal peptide; the sequence is MRKPAAGFLPSLLKVLLLPLAPAAA. The pro-ACR binding stretch occupies residues 26–106; the sequence is QDSTQASTPG…ASWFESFCQF (81 aa). Positions 26–273 are cleaved as a propeptide — removed in mature form; that stretch reads QDSTQASTPG…NPSSFAPRVR (248 aa). A disordered region spans residues 185–272; that stretch reads SLGGQEQAPE…SNPSSFAPRV (88 aa). A compositionally biased stretch (basic and acidic residues) spans 192–220; it reads APEHKQEQGVEHRQEPTQEHKQEEGQKQE. Residues 221–231 show a composition bias toward acidic residues; sequence EQEEEQEEEGK. Residues 232–243 are compositionally biased toward basic and acidic residues; sequence QEEGQGTKEGRE. Residues 319-427 form a pro-ACR binding region; the sequence is LPHTEALLVL…NQVGSPESGR (109 aa).

Binds proacrosin (pro-ACR). Does not bind the mature form of ACR. In terms of processing, phosphorylated on Tyr residues in capacitated sperm. Post-translationally, the N-terminus is blocked. Synthesized as a 60-kDa precursor, the 32-kDa mature form is post-translationally produced by the removal of the N-terminal half of the precursor during sperm maturation in the testis and/or epididymis. Expression restricted to testis in normal tissue. Expressed in a wide spectrum of cancers, including bladder, breast, liver, lung and colon cancers.

It is found in the secreted. Its subcellular location is the cytoplasmic vesicle. The protein resides in the secretory vesicle. It localises to the acrosome. Functionally, acrosomal protein that maintains proacrosin (pro-ACR) as an enzymatically inactive zymogen in the acrosome. Involved also in the acrosome formation. In Homo sapiens (Human), this protein is Acrosin-binding protein.